Here is a 98-residue protein sequence, read N- to C-terminus: uncharacterized protein (98 aa).

It belongs to the HesB/IscA family.

This is an uncharacterized protein from Staphylococcus epidermidis (strain ATCC 35984 / DSM 28319 / BCRC 17069 / CCUG 31568 / BM 3577 / RP62A).